The sequence spans 491 residues: Aspartyl/glutamyl-tRNA(Asn/Gln) amidotransferase subunit B (491 aa).

Belongs to the GatB/GatE family. GatB subfamily. Heterotrimer of A, B and C subunits.

The enzyme catalyses L-glutamyl-tRNA(Gln) + L-glutamine + ATP + H2O = L-glutaminyl-tRNA(Gln) + L-glutamate + ADP + phosphate + H(+). The catalysed reaction is L-aspartyl-tRNA(Asn) + L-glutamine + ATP + H2O = L-asparaginyl-tRNA(Asn) + L-glutamate + ADP + phosphate + 2 H(+). Allows the formation of correctly charged Asn-tRNA(Asn) or Gln-tRNA(Gln) through the transamidation of misacylated Asp-tRNA(Asn) or Glu-tRNA(Gln) in organisms which lack either or both of asparaginyl-tRNA or glutaminyl-tRNA synthetases. The reaction takes place in the presence of glutamine and ATP through an activated phospho-Asp-tRNA(Asn) or phospho-Glu-tRNA(Gln). In Burkholderia multivorans (strain ATCC 17616 / 249), this protein is Aspartyl/glutamyl-tRNA(Asn/Gln) amidotransferase subunit B.